Here is a 64-residue protein sequence, read N- to C-terminus: Large ribosomal subunit protein uL29 (64 aa).

The protein belongs to the universal ribosomal protein uL29 family.

The protein is Large ribosomal subunit protein uL29 of Cupriavidus necator (strain ATCC 17699 / DSM 428 / KCTC 22496 / NCIMB 10442 / H16 / Stanier 337) (Ralstonia eutropha).